A 234-amino-acid polypeptide reads, in one-letter code: Leucyl/phenylalanyl-tRNA--protein transferase (234 aa).

It belongs to the L/F-transferase family.

It localises to the cytoplasm. The catalysed reaction is N-terminal L-lysyl-[protein] + L-leucyl-tRNA(Leu) = N-terminal L-leucyl-L-lysyl-[protein] + tRNA(Leu) + H(+). The enzyme catalyses N-terminal L-arginyl-[protein] + L-leucyl-tRNA(Leu) = N-terminal L-leucyl-L-arginyl-[protein] + tRNA(Leu) + H(+). It catalyses the reaction L-phenylalanyl-tRNA(Phe) + an N-terminal L-alpha-aminoacyl-[protein] = an N-terminal L-phenylalanyl-L-alpha-aminoacyl-[protein] + tRNA(Phe). In terms of biological role, functions in the N-end rule pathway of protein degradation where it conjugates Leu, Phe and, less efficiently, Met from aminoacyl-tRNAs to the N-termini of proteins containing an N-terminal arginine or lysine. The polypeptide is Leucyl/phenylalanyl-tRNA--protein transferase (Escherichia coli O157:H7 (strain EC4115 / EHEC)).